A 408-amino-acid chain; its full sequence is LL-diaminopimelate aminotransferase (408 aa).

Substrate is bound by residues Tyr15 and Gly42. Residues Tyr72, 108–109 (SK), Tyr132, Asn187, Tyr218, and 246–248 (SFS) each bind pyridoxal 5'-phosphate. Residues Lys109, Tyr132, and Asn187 each contribute to the substrate site. Lys249 is modified (N6-(pyridoxal phosphate)lysine). Pyridoxal 5'-phosphate is bound by residues Arg257 and Asn292. Residues Asn292 and Arg388 each contribute to the substrate site.

It belongs to the class-I pyridoxal-phosphate-dependent aminotransferase family. LL-diaminopimelate aminotransferase subfamily. Homodimer. It depends on pyridoxal 5'-phosphate as a cofactor.

The catalysed reaction is (2S,6S)-2,6-diaminopimelate + 2-oxoglutarate = (S)-2,3,4,5-tetrahydrodipicolinate + L-glutamate + H2O + H(+). It participates in amino-acid biosynthesis; L-lysine biosynthesis via DAP pathway; LL-2,6-diaminopimelate from (S)-tetrahydrodipicolinate (aminotransferase route): step 1/1. Its function is as follows. Involved in the synthesis of meso-diaminopimelate (m-DAP or DL-DAP), required for both lysine and peptidoglycan biosynthesis. Catalyzes the direct conversion of tetrahydrodipicolinate to LL-diaminopimelate. This chain is LL-diaminopimelate aminotransferase, found in Leptospira borgpetersenii serovar Hardjo-bovis (strain L550).